The following is a 79-amino-acid chain: Large ribosomal subunit protein bL28 (79 aa).

Belongs to the bacterial ribosomal protein bL28 family.

In Blochmanniella floridana, this protein is Large ribosomal subunit protein bL28.